Here is a 213-residue protein sequence, read N- to C-terminus: 3,4-dihydroxy-2-butanone 4-phosphate synthase (213 aa).

Residues 37–38, D42, 150–154, and E174 each bind D-ribulose 5-phosphate; these read RE and RAGHT. Residue E38 coordinates Mg(2+). H153 is a Mg(2+) binding site.

Belongs to the DHBP synthase family. As to quaternary structure, homodimer. Requires Mg(2+) as cofactor. It depends on Mn(2+) as a cofactor.

The catalysed reaction is D-ribulose 5-phosphate = (2S)-2-hydroxy-3-oxobutyl phosphate + formate + H(+). It participates in cofactor biosynthesis; riboflavin biosynthesis; 2-hydroxy-3-oxobutyl phosphate from D-ribulose 5-phosphate: step 1/1. Functionally, catalyzes the conversion of D-ribulose 5-phosphate to formate and 3,4-dihydroxy-2-butanone 4-phosphate. The sequence is that of 3,4-dihydroxy-2-butanone 4-phosphate synthase from Wigglesworthia glossinidia brevipalpis.